The primary structure comprises 489 residues: Homoserine O-acetyltransferase (489 aa).

Residues 63–435 form the AB hydrolase-1 domain; the sequence is NALVICHALS…SPEGHDAFLL (373 aa). The active site involves S162. Catalysis depends on S162, which acts as the Nucleophile. The interval 247-272 is disordered; sequence RFGRNVPDPSKRQNINGTERLPTPPN. Catalysis depends on residues D401 and H430.

Belongs to the AB hydrolase superfamily. MetX family.

The catalysed reaction is L-homoserine + acetyl-CoA = O-acetyl-L-homoserine + CoA. The protein operates within amino-acid biosynthesis; L-methionine biosynthesis via de novo pathway; O-acetyl-L-homoserine from L-homoserine: step 1/1. Commits homoserine to the methionine biosynthesis pathway by catalyzing its O-acetylation. The protein is Homoserine O-acetyltransferase (metE) of Emericella nidulans (strain FGSC A4 / ATCC 38163 / CBS 112.46 / NRRL 194 / M139) (Aspergillus nidulans).